The primary structure comprises 288 residues: MGQKIHPTGFRLSVSRNWASRWYASNRDFAGMLAEDIKVREYLKAKLKNAAVSRILIERPAKNARITIFSARPGVVIGKKGEDIENLKKELATRLGVPVAVNIEEVRKPEIDAKLIADSITQQLEKRIMFRRAMKRAMQNAMRLGAQGIKIMSSGRLNGIEIARTEWYREGRVPLHTLRADIDYGTSEAKTTYGVIGVKVWVYKGDTLGRNDLPAAETPRPEEERRPRGPRRDGRPGDRAGAGRGGRRPMGTNAAPADGSDKPAGAGGDSVKRVKSAPAAAAADGKGE.

The KH type-2 domain occupies 39 to 107 (VREYLKAKLK…PVAVNIEEVR (69 aa)). A disordered region spans residues 209–288 (GRNDLPAAET…AAAAADGKGE (80 aa)). Basic and acidic residues predominate over residues 219–238 (PRPEEERRPRGPRRDGRPGD). Positions 277–288 (APAAAAADGKGE) are enriched in low complexity.

Belongs to the universal ribosomal protein uS3 family. Part of the 30S ribosomal subunit. Forms a tight complex with proteins S10 and S14.

Functionally, binds the lower part of the 30S subunit head. Binds mRNA in the 70S ribosome, positioning it for translation. In Acidovorax sp. (strain JS42), this protein is Small ribosomal subunit protein uS3.